The following is a 484-amino-acid chain: MIQVLLVTICLAVFPYQGSSIILESGNVNDYEVVYPEKVTALPKGAVQQKYEDAMQYEFKVNGEPVVLYLEKNKELFSENYSETHYSLDGREITTYPSVEDHCYYHGRIQNDADSTASISACNGLKGHFKLRGKTYLIEPLKLPNSEAHAVFKYENVEKEDEAPQMCGVTETNWESDLPIKKTSQLNLPLLEKRCIELVMVADHRMYTKYDGDKTEISSKIYEIANNLNVDYRPMKIRVALIGTEIWSTGNLSKVTLSADETLDSFGEWRERDLLKRKSHDNVQLLTGMIFNEKIEGRAYNKSMCDPKRSVGIVRDHRTRPHLVANRMAHGLGHNLGIHHDGDSCSCGANSCIMSATVSNEPSSRFSDCSLNQYSNDIIYNPWTSYCLYNEPSKTDIVSPPVCGNYYLEVGEDCDCGPPANCQNPCCDATTCKLTPGSQCAEGLCCAQCKFIEEGTVCRVAKGDWNDDHCTGQSGDCPWIGYYG.

Positions 1–20 (MIQVLLVTICLAVFPYQGSS) are cleaved as a signal peptide. Residues 21–191 (IILESGNVND…KTSQLNLPLL (171 aa)) constitute a propeptide that is removed on maturation. N80, N251, and N301 each carry an N-linked (GlcNAc...) asparagine glycan. Residues 194-392 (RCIELVMVAD…WTSYCLYNEP (199 aa)) enclose the Peptidase M12B domain. 10 cysteine pairs are disulfide-bonded: C305–C387, C345–C369, C347–C352, C403–C422, C414–C432, C416–C427, C426–C449, C440–C446, C445–C470, and C458–C477. In terms of domain architecture, Disintegrin spans 400–484 (PPVCGNYYLE…GDCPWIGYYG (85 aa)). A Cell attachment site; atypical (KGD) motif is present at residues 462–464 (KGD).

It belongs to the venom metalloproteinase (M12B) family. P-II subfamily. P-IIb sub-subfamily. Homodimer; disulfide-linked (disintegrin). As to expression, expressed by the venom gland.

The protein localises to the secreted. Functionally, the function of this complete protein has not been studied, but it may be similar to the function of the disintegrin domain. A recombinant protein of this domain (409-484) inhibits collagen-induced human platelet aggregation, without having effect on ADP-induced aggregation. It may act either by blocking the binding of fibrinogen to the platelet receptor GPIIb/GPIIIa (ITGA2B/ITGB3) or by blocking the binding of collagen to the integrin alpha-2/beta-1 complex (ITGA2/ITGB1). This is Zinc metalloproteinase homolog-disintegrin albolatin from Trimeresurus albolabris (White-lipped pit viper).